The sequence spans 212 residues: Thiamine-phosphate synthase (212 aa).

4-amino-2-methyl-5-(diphosphooxymethyl)pyrimidine contacts are provided by residues Q41–K45 and D76. Mg(2+) is bound by residues D77 and D96. S114 is a binding site for 4-amino-2-methyl-5-(diphosphooxymethyl)pyrimidine. T141–S143 lines the 2-[(2R,5Z)-2-carboxy-4-methylthiazol-5(2H)-ylidene]ethyl phosphate pocket. Residue K144 coordinates 4-amino-2-methyl-5-(diphosphooxymethyl)pyrimidine. Residues G172 and I192–S193 each bind 2-[(2R,5Z)-2-carboxy-4-methylthiazol-5(2H)-ylidene]ethyl phosphate.

Belongs to the thiamine-phosphate synthase family. Requires Mg(2+) as cofactor.

The catalysed reaction is 2-[(2R,5Z)-2-carboxy-4-methylthiazol-5(2H)-ylidene]ethyl phosphate + 4-amino-2-methyl-5-(diphosphooxymethyl)pyrimidine + 2 H(+) = thiamine phosphate + CO2 + diphosphate. It catalyses the reaction 2-(2-carboxy-4-methylthiazol-5-yl)ethyl phosphate + 4-amino-2-methyl-5-(diphosphooxymethyl)pyrimidine + 2 H(+) = thiamine phosphate + CO2 + diphosphate. The enzyme catalyses 4-methyl-5-(2-phosphooxyethyl)-thiazole + 4-amino-2-methyl-5-(diphosphooxymethyl)pyrimidine + H(+) = thiamine phosphate + diphosphate. It participates in cofactor biosynthesis; thiamine diphosphate biosynthesis; thiamine phosphate from 4-amino-2-methyl-5-diphosphomethylpyrimidine and 4-methyl-5-(2-phosphoethyl)-thiazole: step 1/1. Its function is as follows. Condenses 4-methyl-5-(beta-hydroxyethyl)thiazole monophosphate (THZ-P) and 2-methyl-4-amino-5-hydroxymethyl pyrimidine pyrophosphate (HMP-PP) to form thiamine monophosphate (TMP). The chain is Thiamine-phosphate synthase from Leuconostoc citreum (strain KM20).